We begin with the raw amino-acid sequence, 376 residues long: Glucose-1-phosphate adenylyltransferase (376 aa).

Residues tyrosine 101, glycine 166, 181–182 (EK), and serine 192 each bind alpha-D-glucose 1-phosphate.

It belongs to the bacterial/plant glucose-1-phosphate adenylyltransferase family. In terms of assembly, homotetramer.

The catalysed reaction is alpha-D-glucose 1-phosphate + ATP + H(+) = ADP-alpha-D-glucose + diphosphate. It functions in the pathway glycan biosynthesis; glycogen biosynthesis. In terms of biological role, involved in the biosynthesis of ADP-glucose, a building block required for the elongation reactions to produce glycogen. Catalyzes the reaction between ATP and alpha-D-glucose 1-phosphate (G1P) to produce pyrophosphate and ADP-Glc. The protein is Glucose-1-phosphate adenylyltransferase of Bacillus thuringiensis (strain Al Hakam).